The sequence spans 132 residues: Small ribosomal subunit protein uS8 (132 aa).

Belongs to the universal ribosomal protein uS8 family. In terms of assembly, part of the 30S ribosomal subunit. Contacts proteins S5 and S12.

Its function is as follows. One of the primary rRNA binding proteins, it binds directly to 16S rRNA central domain where it helps coordinate assembly of the platform of the 30S subunit. The sequence is that of Small ribosomal subunit protein uS8 from Alkaliphilus oremlandii (strain OhILAs) (Clostridium oremlandii (strain OhILAs)).